Here is a 293-residue protein sequence, read N- to C-terminus: Beta-porphyranase B (293 aa).

A signal peptide spans 1–21 (MKLSNQFLITITLLITSITFA). The GH16 domain occupies 38–291 (QEWKLIENMS…WVRSWQLVDS (254 aa)). The substrate site is built by tryptophan 67, arginine 70, glutamate 156, glutamate 161, and glutamate 256. Residue glutamate 156 is the Nucleophile of the active site. Glutamate 161 functions as the Proton donor in the catalytic mechanism.

This sequence belongs to the glycosyl hydrolase 16 family.

The protein localises to the periplasm. It carries out the reaction Hydrolysis of beta-D-galactopyranose-(1-&gt;4)-alpha-L-galactopyranose-6-sulfate linkages in porphyran.. Cleaves the sulfated polysaccharide porphyran at the (1-&gt;4) linkages between beta-D-galactopyranose and alpha-L-galactopyranose-6-sulfate, forming mostly the disaccharide alpha-L-galactopyranose-6-sulfate-(1-&gt;3)-beta-D-galactose. Some longer oligosaccharides of even number of residues are also observed. Inactive on the non-sulfated agarose portion of the porphyran backbone. In contrast to PorA, tolerates the presence of 3-6-anhydro-L-galactose in subsite -2. The sequence is that of Beta-porphyranase B (porB) from Zobellia galactanivorans (strain DSM 12802 / CCUG 47099 / CIP 106680 / NCIMB 13871 / Dsij).